The chain runs to 577 residues: MVQSAPASEIAALILRGFDDYREQFREITDGARARFEQAQWQEAQRASTQRINLYEEKVAETVAGLRVGLADSELLDVERWPIIKSAYIAQIDLRLDDELAETWFNSIFCGLFSHDNISDGTMFVHTTRPSLRAHARAPYTRTYRPGGDLRQALEKIFDDYRFDVPYDDRERDLERIDALLHSNLPDWVCKDPDLAIELIGSVFYRNKGAYLVGRLFTPDEQWPLVFPLLHREGHGIQFDTVITDEAEVSIIFSFTRSYFMVDVPVPAELVAFLKRLLPGKHLAELYTSIGFYKQGKSEFYRALINHLATTDDRFVMAPGVRGMVMSVFTLPGFNTVFKIIKDRFNPSKSVDHATVIQKYQLVKNHDRVGRLADTQQFADFRFPVSKFEPECLAELLEVAPSTVVMEGDVVLIRHCWTERRMTPLNIYLENASEAQTREALNDYGLAIKQLAAANIFPGDMLLKNFGVTRHGRVVFYDYDEICYLTEVNFRYIPEPRFPEDEMSSEPWYSVGPNDVFPEEFPRFLFVDLNQRRLFAKLHGNLYDAKYWQGLQEQIREGKVIDVFPYRRQETPEQLLG.

Residues 318–324 (APGVRGM) and Lys-339 contribute to the ATP site. The active site involves Asp-374.

The protein belongs to the AceK family.

It is found in the cytoplasm. The catalysed reaction is L-seryl-[isocitrate dehydrogenase] + ATP = O-phospho-L-seryl-[isocitrate dehydrogenase] + ADP + H(+). Functionally, bifunctional enzyme which can phosphorylate or dephosphorylate isocitrate dehydrogenase (IDH) on a specific serine residue. This is a regulatory mechanism which enables bacteria to bypass the Krebs cycle via the glyoxylate shunt in response to the source of carbon. When bacteria are grown on glucose, IDH is fully active and unphosphorylated, but when grown on acetate or ethanol, the activity of IDH declines drastically concomitant with its phosphorylation. In Pseudomonas aeruginosa (strain UCBPP-PA14), this protein is Isocitrate dehydrogenase kinase/phosphatase.